The chain runs to 665 residues: DNA ligase (665 aa).

NAD(+)-binding positions include 32-36, 81-82, and glutamate 110; these read DSEYD and SL. The active-site N6-AMP-lysine intermediate is lysine 112. Positions 133, 167, 283, and 307 each coordinate NAD(+). Zn(2+)-binding residues include cysteine 401, cysteine 404, cysteine 419, and cysteine 424. The BRCT domain occupies 586-665; the sequence is EGHPDFSGKT…AAFIEKQNGI (80 aa).

Belongs to the NAD-dependent DNA ligase family. LigA subfamily. Mg(2+) serves as cofactor. It depends on Mn(2+) as a cofactor.

The enzyme catalyses NAD(+) + (deoxyribonucleotide)n-3'-hydroxyl + 5'-phospho-(deoxyribonucleotide)m = (deoxyribonucleotide)n+m + AMP + beta-nicotinamide D-nucleotide.. DNA ligase that catalyzes the formation of phosphodiester linkages between 5'-phosphoryl and 3'-hydroxyl groups in double-stranded DNA using NAD as a coenzyme and as the energy source for the reaction. It is essential for DNA replication and repair of damaged DNA. The polypeptide is DNA ligase (Staphylococcus epidermidis (strain ATCC 35984 / DSM 28319 / BCRC 17069 / CCUG 31568 / BM 3577 / RP62A)).